We begin with the raw amino-acid sequence, 474 residues long: MEGESAETEPLIQSSSAADRPDPAAEAAARFTVYRRRWFILSVLCLLNCSNAMAWLTFAPVAGQSAQLLCVSLPLVNWLSLVFVLAAVVCSFSSMWVLDTLGLRCSLIGSSWLNACGCVLRVCGVLSVTPQWAVFAVVMCGQTLCALAQPLVIFAPTKLAALWFPDHQRATANMLASMANTVGLLLANLLSPLIVSYSGDLFLLLLIYSIPAAVACLLATLGIHQAVPPTPASASSSSSASEPFLQGIRQLLRNRAYWILLLCFGSGIGIFTCFSTLLEQILCVKGYSNGFAGVCGAVSIVCGVAGAFLLSLYVDRSKKFMEVMKICMCLTSVSCSAFAVVSQLPAQSVLLVLVCCCFGLFGYSVYPVGMELSVETTHPLGEATSAGLIFTSGQIQAALYLLLLQALATPTHSPTSVCAADTSLNWTVPVLVMAGVCAISSCVFVVFFHTEYRRLRAEADSATEPEPTGDAADA.

A disordered region spans residues 1–20 (MEGESAETEPLIQSSSAADR). Transmembrane regions (helical) follow at residues 38-58 (WFIL…WLTF), 69-89 (LCVS…AAVV), 105-126 (CSLI…CGVL), 134-154 (VFAV…LVIF), 175-195 (LASM…PLIV), 201-221 (LFLL…LATL), 258-278 (WILL…STLL), 290-310 (GFAG…AFLL), 326-346 (ICMC…QLPA), 349-369 (VLLV…YPVG), 388-408 (LIFT…QALA), and 428-448 (VPVL…VVFF).

This sequence belongs to the major facilitator superfamily.

It localises to the membrane. In Danio rerio (Zebrafish), this protein is Solute carrier family 49 member A3 (slc49a3).